A 552-amino-acid polypeptide reads, in one-letter code: MIRRFLRLYSIKRNTHLILEDLQSIKFNKDDLKAIDSALKLVTVKQTTSSSKLSRTRAKQEYIDRKLEVIRNIFPGEPDSEYVSMEPPNDLKNPYFDVYSKTVLDEDGNIKFAGTERLSVTKLLTKRWCELNQMYDIYSRLPIFEHRQLKVGKVEHEKLEKAIHGVAPAVEDFMETYEWELAEDDTHQLADNWFQCIHRLLTLFSSGEAREILCHGYIDSRSCQLIEGQVKDDRDILISGIIDHVVLFHVNNNKPKSLEPALREKNGFDLLKIISFLGDTIPQAEDLKIAVGDVKTRPRAIVPNHASVVRASKLQVMYYRFFLENLGKDPEIAYQKLILNATRRDINIDTPINISNLIYFMEIDPAIRPDLERIMLGEPIGFEPFDRYYQSELENGDEDNIAMPSEIGEANEYNLSQYADLTMEESTLEKYGTFYQKWANPPTLRYFAARLAQLYGTLLPLLSNDLMIEYYTGDYKFYTDKFQYDSALLKQECHSSSQFWFGKRSVEPIVPTKKNLVTFCKYCDFHDVCGWRANGNKMFKQLGPTLEEISKL.

Cysteine 129, cysteine 520, cysteine 523, and cysteine 529 together coordinate [4Fe-4S] cluster.

The protein belongs to the EXO5 family. As to quaternary structure, monomer. Mg(2+) is required as a cofactor. The cofactor is [4Fe-4S] cluster.

It is found in the mitochondrion. In terms of biological role, single strand DNA specific 5' exonuclease involved in mitochondrial DNA replication and recombination. Releases dinucleotides as main products of catalysis. Has the capacity to slide across 5'double-stranded DNA or 5'RNA sequences and resumes cutting two nucleotides downstream of the double-stranded-to-single-stranded junction or RNA-to-DNA junction, respectively. The protein is Exonuclease V, mitochondrial (EXO5) of Kluyveromyces lactis (strain ATCC 8585 / CBS 2359 / DSM 70799 / NBRC 1267 / NRRL Y-1140 / WM37) (Yeast).